We begin with the raw amino-acid sequence, 332 residues long: Ribosomal RNA small subunit methyltransferase H (332 aa).

Residues 39-41 (GGY), Asp-56, Phe-83, Asp-100, and Gln-107 each bind S-adenosyl-L-methionine.

Belongs to the methyltransferase superfamily. RsmH family.

The protein resides in the cytoplasm. It carries out the reaction cytidine(1402) in 16S rRNA + S-adenosyl-L-methionine = N(4)-methylcytidine(1402) in 16S rRNA + S-adenosyl-L-homocysteine + H(+). Its function is as follows. Specifically methylates the N4 position of cytidine in position 1402 (C1402) of 16S rRNA. The chain is Ribosomal RNA small subunit methyltransferase H from Bartonella grahamii (strain as4aup).